A 265-amino-acid chain; its full sequence is Energy-coupling factor transporter transmembrane protein EcfT (265 aa).

The next 5 helical transmembrane spans lie at 32–52 (MVLL…VFII), 72–92 (LVII…GRVI), 115–135 (LIML…IALT), 150–170 (VPAH…PTLM), and 245–265 (LAAF…RFIW).

It belongs to the energy-coupling factor EcfT family. Forms a stable energy-coupling factor (ECF) transporter complex composed of 2 membrane-embedded substrate-binding proteins (S component), 2 ATP-binding proteins (A component) and 2 transmembrane proteins (T component). May be able to interact with more than 1 S component at a time.

It is found in the cell membrane. Transmembrane (T) component of an energy-coupling factor (ECF) ABC-transporter complex. Unlike classic ABC transporters this ECF transporter provides the energy necessary to transport a number of different substrates. The sequence is that of Energy-coupling factor transporter transmembrane protein EcfT from Thermosediminibacter oceani (strain ATCC BAA-1034 / DSM 16646 / JW/IW-1228P).